A 187-amino-acid chain; its full sequence is Pyridoxal 5'-phosphate synthase subunit PdxT (187 aa).

L-glutamine is bound at residue 47 to 49; it reads GES. C76 acts as the Nucleophile in catalysis. Residues R102 and 128 to 129 each bind L-glutamine; that span reads IR. Catalysis depends on charge relay system residues H165 and E167.

Belongs to the glutaminase PdxT/SNO family. As to quaternary structure, in the presence of PdxS, forms a dodecamer of heterodimers. Only shows activity in the heterodimer.

It carries out the reaction aldehydo-D-ribose 5-phosphate + D-glyceraldehyde 3-phosphate + L-glutamine = pyridoxal 5'-phosphate + L-glutamate + phosphate + 3 H2O + H(+). The catalysed reaction is L-glutamine + H2O = L-glutamate + NH4(+). Its pathway is cofactor biosynthesis; pyridoxal 5'-phosphate biosynthesis. In terms of biological role, catalyzes the hydrolysis of glutamine to glutamate and ammonia as part of the biosynthesis of pyridoxal 5'-phosphate. The resulting ammonia molecule is channeled to the active site of PdxS. This is Pyridoxal 5'-phosphate synthase subunit PdxT from Methanococcus maripaludis (strain DSM 14266 / JCM 13030 / NBRC 101832 / S2 / LL).